Reading from the N-terminus, the 428-residue chain is MLRFAPSPTGDMRTEQLRIAIFNYIVAKQKEVNFIVRIEDTDKERNITGKDTEILQILEKFAITHDSVFHQSEHLNIHQTLAIRLLEEGKAFVCTCTPEAPESDKTPSRYNGKCFNVDKEELKRLKEEKIPFVIRLKKPEHDMIIHDLYKGETVTSADEVDSFVILRADATPTENFASACDDMLSGIDFIIRSEEHLDETAKQEYVKKQLGYEEETTYAHLPVILNEEGQKMDEKDDAFTVKWLFEEGYIPDAIANYLISLGNTTPTDIFTLPEAIEWFNITKLSGSPVKFNIEELRLLNRKHLEKMDDKRLSSLFGFADADIGKLAKLYINEAATINELDARIKAIFSPKDFDGKWGEQMRMLEKIIAEAPMFATFEAFESHLMKESGLSGEYFSKPLRVLLTGAEQGPELSDIYPYIKSYLLEVAS.

The short motif at Pro6 to Gln16 is the 'HIGH' region element.

The protein belongs to the class-I aminoacyl-tRNA synthetase family. Glutamate--tRNA ligase type 1 subfamily. In terms of assembly, monomer.

The protein localises to the cytoplasm. It carries out the reaction tRNA(Glu) + L-glutamate + ATP = L-glutamyl-tRNA(Glu) + AMP + diphosphate. Its function is as follows. Catalyzes the attachment of glutamate to tRNA(Glu) in a two-step reaction: glutamate is first activated by ATP to form Glu-AMP and then transferred to the acceptor end of tRNA(Glu). The polypeptide is Glutamate--tRNA ligase 2 (Sulfurovum sp. (strain NBC37-1)).